The following is a 266-amino-acid chain: Receptor-like protein 5 (266 aa).

The first 19 residues, 1-19 (MINYRHIVFCLCVMVVVDS), serve as a signal peptide directing secretion. The Extracellular portion of the chain corresponds to 20–169 (RLTPYLAAIE…PTRNKNKPTV (150 aa)). 2 LRR repeats span residues 93–117 (LTSL…ITKL) and 119–143 (NLTI…IVIL). N-linked (GlcNAc...) asparagine glycosylation occurs at Asn-119. A helical membrane pass occupies residues 170-190 (LVLLLGILVGLVVAGGASFGF). The Cytoplasmic portion of the chain corresponds to 191–266 (YLYRIRKQPK…TNQNPHLPYM (76 aa)).

The protein belongs to the RLP family.

Its subcellular location is the cell membrane. In Arabidopsis thaliana (Mouse-ear cress), this protein is Receptor-like protein 5.